The chain runs to 381 residues: MTGVISSSSIGEKINEWYMYIRRFSIPDAEYLRREIKQELDQMEEDQDLHLYYSLMEFRHNLMLEYLEPLEKMRIEEQPRLSDLLLEIDKKQARLTGLLEYYFNFFRGMYELDQREYLSAIKFFKKAESKLIFVKDRIEKAEFFFKMSESYYYMKQTYFSMDYARQAYEIYKEHEAYNIRLLQCHSLFATNFLDLKQYEDAISHFQKAYSMAEAEKQPQLMGRTLYNIGLCKNSQSQYEDAIPYFKRAIAVFEESNILPSLPQAYFLITQIHYKLGKIDKAHEYHSKGMAYSQKAGDVIYLSEFEFLKSLYLSGPDEEAIQGFFDFLESKMLYADLEDFAIDVAKYYHERKNFQKASAYFLKVEQVRQLIQGGVSLYEIEV.

L40, M43, and E45 together coordinate Mn(2+). 6 TPR repeats span residues 101–137 (YYFN…VKDR), 148–181 (SESY…NIRL), 182–215 (LQCH…AEAE), 222–255 (GRTL…FEES), 262–295 (PQAY…SQKA), and 337–370 (EDFA…RQLI).

This sequence belongs to the Rap family. Monomer. Is monomeric either alone or in complex with PhrF. Interacts specifically with the C-terminal DNA-binding domain of ComA. Interacts with PhrF.

Its subcellular location is the cytoplasm. Its activity is regulated as follows. Inhibited by PhrF, which prevents RapF-ComA interaction. Interaction with PhrF induces a conformational change in RapF, which is propagated to the ComA binding site and causes the dissociation of ComA from RapF. Involved in the regulation of genetic competence development. Inhibits the activity of ComA, a transcriptional factor that regulates the development of genetic competence. Acts by binding to ComA, leading to the inhibition of its DNA-binding activity. May also affect transcription independently of ComA. In Bacillus subtilis (strain 168), this protein is Regulatory protein RapF (rapF).